We begin with the raw amino-acid sequence, 166 residues long: NADPH-dependent 7-cyano-7-deazaguanine reductase (166 aa).

The Thioimide intermediate role is filled by cysteine 57. Residue aspartate 64 is the Proton donor of the active site. Substrate-binding positions include 79–81 (VES) and 98–99 (HE).

This sequence belongs to the GTP cyclohydrolase I family. QueF type 1 subfamily.

It localises to the cytoplasm. The catalysed reaction is 7-aminomethyl-7-carbaguanine + 2 NADP(+) = 7-cyano-7-deazaguanine + 2 NADPH + 3 H(+). It participates in tRNA modification; tRNA-queuosine biosynthesis. In terms of biological role, catalyzes the NADPH-dependent reduction of 7-cyano-7-deazaguanine (preQ0) to 7-aminomethyl-7-deazaguanine (preQ1). The sequence is that of NADPH-dependent 7-cyano-7-deazaguanine reductase from Staphylococcus saprophyticus subsp. saprophyticus (strain ATCC 15305 / DSM 20229 / NCIMB 8711 / NCTC 7292 / S-41).